The following is a 452-amino-acid chain: Probable M18 family aminopeptidase 1 (452 aa).

Histidine 93, histidine 168, and histidine 427 together coordinate Zn(2+).

Belongs to the peptidase M18 family. Zn(2+) is required as a cofactor.

The protein is Probable M18 family aminopeptidase 1 (apeA) of Thermotoga neapolitana.